Reading from the N-terminus, the 185-residue chain is Large ribosomal subunit protein uL5 (185 aa).

The protein belongs to the universal ribosomal protein uL5 family. Part of the 50S ribosomal subunit; part of the 5S rRNA/L5/L18/L25 subcomplex. Contacts the 5S rRNA and the P site tRNA. Forms a bridge to the 30S subunit in the 70S ribosome.

Functionally, this is one of the proteins that bind and probably mediate the attachment of the 5S RNA into the large ribosomal subunit, where it forms part of the central protuberance. In the 70S ribosome it contacts protein S13 of the 30S subunit (bridge B1b), connecting the 2 subunits; this bridge is implicated in subunit movement. Contacts the P site tRNA; the 5S rRNA and some of its associated proteins might help stabilize positioning of ribosome-bound tRNAs. This is Large ribosomal subunit protein uL5 from Sinorhizobium medicae (strain WSM419) (Ensifer medicae).